Consider the following 507-residue polypeptide: UDP-N-acetylglucosamine 1-carboxyvinyltransferase 1 (507 aa).

Position 41-42 (41-42 (KN)) interacts with phosphoenolpyruvate. Arginine 112 lines the UDP-N-acetyl-alpha-D-glucosamine pocket. The Proton donor role is filled by cysteine 136. Cysteine 136 carries the post-translational modification 2-(S-cysteinyl)pyruvic acid O-phosphothioketal. UDP-N-acetyl-alpha-D-glucosamine contacts are provided by residues 141–145 (RPIDL), aspartate 328, and leucine 350.

The protein belongs to the EPSP synthase family. MurA subfamily.

The protein resides in the cytoplasm. It catalyses the reaction phosphoenolpyruvate + UDP-N-acetyl-alpha-D-glucosamine = UDP-N-acetyl-3-O-(1-carboxyvinyl)-alpha-D-glucosamine + phosphate. It participates in cell wall biogenesis; peptidoglycan biosynthesis. Cell wall formation. Adds enolpyruvyl to UDP-N-acetylglucosamine. The protein is UDP-N-acetylglucosamine 1-carboxyvinyltransferase 1 of Legionella pneumophila (strain Lens).